Here is a 177-residue protein sequence, read N- to C-terminus: Large ribosomal subunit protein uL5 (177 aa).

Belongs to the universal ribosomal protein uL5 family. As to quaternary structure, part of the 50S ribosomal subunit; part of the 5S rRNA/L5/L18/L25 subcomplex. Contacts the 5S rRNA and the P site tRNA. Forms a bridge to the 30S subunit in the 70S ribosome.

This is one of the proteins that bind and probably mediate the attachment of the 5S RNA into the large ribosomal subunit, where it forms part of the central protuberance. In the 70S ribosome it contacts protein S13 of the 30S subunit (bridge B1b), connecting the 2 subunits; this bridge is implicated in subunit movement. Contacts the P site tRNA; the 5S rRNA and some of its associated proteins might help stabilize positioning of ribosome-bound tRNAs. In Ehrlichia ruminantium (strain Welgevonden), this protein is Large ribosomal subunit protein uL5.